The sequence spans 257 residues: MIEFRNVSKVYPNGTKGLNNINLKIQKGEFVVMVGLSGAGKSTLLRSVNRLHEITEGEIMIEGESITAAKGKGLRRMRRDIGMIFQSFNLVKRSTVLKNVLAGRVGYHSTLRTTLGLFPKEDLELAFQSLKRVNILEKAYARADELSGGQQQRVSIARALAQEAKIILADEPVASLDPLTTKQVLDDLKKINEDFGITTIVNLHSIDLARQYATRIIGLHAGEIVFDGLVEEATDEKFAEIYGDVAQKSKLLEVAVK.

One can recognise an ABC transporter domain in the interval 2–246 (IEFRNVSKVY…KFAEIYGDVA (245 aa)). An ATP-binding site is contributed by 35–42 (GLSGAGKS).

Belongs to the ABC transporter superfamily. Phosphonates importer (TC 3.A.1.9.1) family. In terms of assembly, the complex is composed of two ATP-binding proteins (PhnC), two transmembrane proteins (PhnE) and a solute-binding protein (PhnD).

It is found in the cell membrane. The catalysed reaction is phosphonate(out) + ATP + H2O = phosphonate(in) + ADP + phosphate + H(+). Part of the ABC transporter complex PhnCDE involved in phosphonates import. Responsible for energy coupling to the transport system. The sequence is that of Phosphonates import ATP-binding protein PhnC from Bacillus cereus (strain ZK / E33L).